The primary structure comprises 158 residues: Serglycin (158 aa).

The first 27 residues, 1–27 (MMQKLLKCSRLVLALALILVLESSVQG), serve as a signal peptide directing secretion. C40 and C49 form a disulfide bridge. O-linked (Xyl...) (glycosaminoglycan) serine glycans are attached at residues S94 and S96. Repeat copies occupy residues 94–95 (SG), 96–97 (SG), 98–99 (FG), 100–101 (SG), 102–103 (SG), 104–105 (SG), 106–107 (SG), 108–109 (SG), and 110–111 (SG). The 9 X 2 AA tandem repeats of [SF]-G stretch occupies residues 94-111 (SGSGFGSGSGSGSGSGSG). S100, S102, S104, S106, S108, and S110 each carry an O-linked (Xyl...) (glycosaminoglycan) serine glycan. Positions 134-158 (RSLDRNLPSDSQDLGQHGLEEDFML) are disordered.

It belongs to the serglycin family. In terms of assembly, binds to activated CD44 and to GZMB. Post-translationally, O-glycosylated; contains chondroitin sulfate and heparan sulfate.

The protein localises to the cytoplasmic granule. Its subcellular location is the cytolytic granule. The protein resides in the secreted. It localises to the extracellular space. It is found in the golgi apparatus. Its function is as follows. Plays a role in formation of mast cell secretory granules and mediates storage of various compounds in secretory vesicles. Required for storage of some proteases in both connective tissue and mucosal mast cells and for storage of granzyme B in T-lymphocytes. Plays a role in localizing neutrophil elastase in azurophil granules of neutrophils. Mediates processing of MMP2. Plays a role in cytotoxic cell granule-mediated apoptosis by forming a complex with granzyme B which is delivered to cells by perforin to induce apoptosis. Regulates the secretion of TNF-alpha and may also regulate protease secretion. Inhibits bone mineralization. The sequence is that of Serglycin (SRGN) from Homo sapiens (Human).